The sequence spans 877 residues: (E,E)-geranyllinalool synthase (877 aa).

Residues Asp540 and Asp544 each coordinate Mg(2+). The substrate site is built by Asp540, Asp544, Arg677, and Asn680. Positions 540–544 (DDFFD) match the DDXXD motif motif. Positions 680, 684, and 688 each coordinate Mg(2+).

Belongs to the terpene synthase family. Tpsf subfamily. Mg(2+) serves as cofactor. Requires Mn(2+) as cofactor. Expressed in leaves and flowers.

It is found in the cytoplasm. It carries out the reaction (2E,6E,10E)-geranylgeranyl diphosphate + H2O = (6E,10E)-geranyllinalool + diphosphate. The protein operates within secondary metabolite biosynthesis; terpenoid biosynthesis. Involved in the biosynthesis of homoterpenes, attractants of herbivores parasitoids and predators (e.g. predatory mites and parasitoid wasps). Involved in diterpene (C20) biosynthesis. Catalyzes the conversion of geranylgeranyl diphosphate to (E,E)-geranyllinalool, the precursor of the insect-induced volatile C16-homoterpene TMTT. The protein is (E,E)-geranyllinalool synthase of Arabidopsis thaliana (Mouse-ear cress).